A 493-amino-acid chain; its full sequence is Cytochrome P450 710A4 (493 aa).

A helical transmembrane segment spans residues 5-25; it reads VSLFASLTPYLVSALLLFLLL. Cys-435 contributes to the heme binding site.

This sequence belongs to the cytochrome P450 family. Heme serves as cofactor. As to expression, very weak expression in roots and root hairs. Not detected in the root tips.

The protein localises to the membrane. It catalyses the reaction 5-dehydroepisterol + NADPH + O2 + H(+) = ergosta-5,7,22,24(28)-tetraen-3beta-ol + NADP(+) + 2 H2O. It functions in the pathway steroid biosynthesis; sterol biosynthesis. Functionally, required to form the C-22 double bond in the sterol side chain. Possesses C-22 desaturase activity toward beta-sitosterol and produces stigmasterol. The chain is Cytochrome P450 710A4 from Arabidopsis thaliana (Mouse-ear cress).